A 250-amino-acid chain; its full sequence is tRNA (guanine-N(1)-)-methyltransferase (250 aa).

Residues Gly116 and 136–141 contribute to the S-adenosyl-L-methionine site; that span reads IGDYVL.

The protein belongs to the RNA methyltransferase TrmD family. Homodimer.

It localises to the cytoplasm. It carries out the reaction guanosine(37) in tRNA + S-adenosyl-L-methionine = N(1)-methylguanosine(37) in tRNA + S-adenosyl-L-homocysteine + H(+). In terms of biological role, specifically methylates guanosine-37 in various tRNAs. The chain is tRNA (guanine-N(1)-)-methyltransferase from Pseudomonas putida (strain W619).